The following is a 34-amino-acid chain: Beta/mu-theraphotoxin-Pe1b (34 aa).

3 disulfide bridges follow: Cys-2–Cys-16, Cys-9–Cys-21, and Cys-15–Cys-28.

It belongs to the neurotoxin 10 (Hwtx-1) family. 54 (ProTx-1) subfamily. Expressed by the venom gland.

The protein localises to the secreted. In terms of biological role, ion channel impairing toxin that inhibits several voltage-gated sodium channels. It acts by inhibiting the inward component of the sodium current and by shifting the voltage dependence of channel activation to more depolarized potentials. Its most potent activity is on Nav1.7/SCN9A (IC(50)=167 nM), followed by Nav1.6/SCN8A (IC(50)=696 nM), and Nav1.2/SCN2A (IC(50)=3.54 uM). In Phormingochilus everetti (Malaysian purple earth tiger tarantula), this protein is Beta/mu-theraphotoxin-Pe1b.